Here is a 128-residue protein sequence, read N- to C-terminus: Large ribosomal subunit protein bL17 (128 aa).

The protein belongs to the bacterial ribosomal protein bL17 family. In terms of assembly, part of the 50S ribosomal subunit. Contacts protein L32.

The chain is Large ribosomal subunit protein bL17 from Baumannia cicadellinicola subsp. Homalodisca coagulata.